Reading from the N-terminus, the 122-residue chain is Large ribosomal subunit protein uL14 (122 aa).

This sequence belongs to the universal ribosomal protein uL14 family. As to quaternary structure, part of the 50S ribosomal subunit. Forms a cluster with proteins L3 and L19. In the 70S ribosome, L14 and L19 interact and together make contacts with the 16S rRNA in bridges B5 and B8.

Functionally, binds to 23S rRNA. Forms part of two intersubunit bridges in the 70S ribosome. This is Large ribosomal subunit protein uL14 from Clostridioides difficile (strain 630) (Peptoclostridium difficile).